A 213-amino-acid chain; its full sequence is Probable nicotinate-nucleotide adenylyltransferase (213 aa).

Belongs to the NadD family.

The enzyme catalyses nicotinate beta-D-ribonucleotide + ATP + H(+) = deamido-NAD(+) + diphosphate. The protein operates within cofactor biosynthesis; NAD(+) biosynthesis; deamido-NAD(+) from nicotinate D-ribonucleotide: step 1/1. Catalyzes the reversible adenylation of nicotinate mononucleotide (NaMN) to nicotinic acid adenine dinucleotide (NaAD). This Pectobacterium atrosepticum (strain SCRI 1043 / ATCC BAA-672) (Erwinia carotovora subsp. atroseptica) protein is Probable nicotinate-nucleotide adenylyltransferase.